We begin with the raw amino-acid sequence, 741 residues long: MEFIYKYAWIVPFLPLSASVPIGLGSLFFPGATKSVRRTWALISIFLLSVAMFLSFNLFLQQITGGPIYRYFWSWVINNKFSLELGYLIDPLTSIMLVLVTTVGTMVMIYSDNYMSHDKTYVRFFAYLNFFNASMLGLVISPNLLQIYIFWELVGMCSYLLIGFWFTRPSAANACQKAFITNRAGDFGLLLGILGFYWVTGSFEFQYLSEKLNELTAIDGVGSFFVTSCAFLLFLGPVAKSAQFPLHVWLPDAMEGPTPISALIHAATMVAAGIFLVARLFPLFKALPLIMYLISWIGGITALLGATMALAQKDLKRGLAYSTMSQLGYMMLALGIDSYRIALFHLITHAYSKALLFLGSGSVIHSMEPIVGYCPRKSQNMALMGGLRKYMPITGITFLLGTLSLSGIPPFACFWSKDQILSDSKLYSPIFGGITWFTAGLTAFYMFRMYLLTFEGDFRVNLVNSYNNHITLYSTSMWGEEESRILNRTRADSMSNQIIGRNNSFSKEAFQISNKMEGLYKKNRGLVVTYPFFYKGSFAYPKESGKAMLFPLVVLGIFTLFVGLIGVPFFRSGMRYDILSQWFASSTAPFDKKHPENWSEFFIDAIPSVGIAFLGILIACILYRPIYFLSQDVYHKTNPHMKIIMDQSINIIYNWSFYQAYIDIYYDIILIKGIRGLAETSHSFDQWAIDGIPNGVGFLGLFVGEGMRCLGGGRISSYIFFSLFCVLISILIYYYSFSFYP.

The next 18 membrane-spanning stretches (helical) occupy residues 9–29, 40–60, 89–109, 124–144, 147–167, 185–205, 218–238, 258–278, 286–306, 327–347, 354–374, 395–415, 427–447, 550–570, 601–621, 651–671, 687–707, and 719–739; these read WIVP…SLFF, WALI…NLFL, IDPL…MVMI, FFAY…SPNL, IYIF…FWFT, GDFG…SFEF, IDGV…LGPV, TPIS…FLVA, ALPL…LLGA, LGYM…FHLI, ALLF…VGYC, GITF…ACFW, YSPI…FYMF, FPLV…VPFF, FFID…IACI, IIYN…IILI, WAID…GEGM, and IFFS…SFSF.

The protein belongs to the complex I subunit 5 family. In terms of assembly, NDH is composed of at least 16 different subunits, 5 of which are encoded in the nucleus.

Its subcellular location is the plastid. The protein resides in the chloroplast thylakoid membrane. It catalyses the reaction a plastoquinone + NADH + (n+1) H(+)(in) = a plastoquinol + NAD(+) + n H(+)(out). It carries out the reaction a plastoquinone + NADPH + (n+1) H(+)(in) = a plastoquinol + NADP(+) + n H(+)(out). Functionally, NDH shuttles electrons from NAD(P)H:plastoquinone, via FMN and iron-sulfur (Fe-S) centers, to quinones in the photosynthetic chain and possibly in a chloroplast respiratory chain. The immediate electron acceptor for the enzyme in this species is believed to be plastoquinone. Couples the redox reaction to proton translocation, and thus conserves the redox energy in a proton gradient. This chain is NAD(P)H-quinone oxidoreductase subunit 5, chloroplastic (ndhF), found in Cryptomeria japonica (Japanese cedar).